An 80-amino-acid polypeptide reads, in one-letter code: MVTKNYLIDKVHDKLDYLSKQDVKESVDLILDYLNESLKEQKRIEIRNFGNFSIRKRKFPESNKFYNTVYYRMPKNLFKD.

The protein belongs to the bacterial histone-like protein family.

Functionally, histone-like DNA-binding protein which is capable of wrapping DNA to stabilize it, and thus to prevent its denaturation under extreme environmental conditions. This chain is DNA-binding protein HU-like, found in Rickettsia prowazekii (strain Madrid E).